A 124-amino-acid polypeptide reads, in one-letter code: MSEIRDDRQYTQTHEWILDHGDGTYTMGITDHAQALLGDMVFVELPNIDDEVSIEDEFCVVESVKAASGVYAPADLQIIKVNKALDDEPELINYSCYDDGWLVKFKSHSVDDLMNVAVYAQILD.

Positions 24 to 106 (TYTMGITDHA…YDDGWLVKFK (83 aa)) constitute a Lipoyl-binding domain. N6-lipoyllysine is present on K65.

This sequence belongs to the GcvH family. The glycine cleavage system is composed of four proteins: P, T, L and H. The cofactor is (R)-lipoate.

In terms of biological role, the glycine cleavage system catalyzes the degradation of glycine. The H protein shuttles the methylamine group of glycine from the P protein to the T protein. This is Glycine cleavage system H protein from Ruthia magnifica subsp. Calyptogena magnifica.